A 428-amino-acid polypeptide reads, in one-letter code: Maltoporin (428 aa).

A signal peptide spans 1-24 (MKSMRILPISLTIMAGLLSIEASA).

It belongs to the porin LamB (TC 1.B.3) family. In terms of assembly, homotrimer formed of three 18-stranded antiparallel beta-barrels, containing three independent channels.

It localises to the cell outer membrane. The enzyme catalyses beta-maltose(in) = beta-maltose(out). Involved in the transport of maltose and maltodextrins. This is Maltoporin from Photorhabdus laumondii subsp. laumondii (strain DSM 15139 / CIP 105565 / TT01) (Photorhabdus luminescens subsp. laumondii).